A 268-amino-acid chain; its full sequence is 3-methyl-2-oxobutanoate hydroxymethyltransferase (268 aa).

Aspartate 41 and aspartate 80 together coordinate Mg(2+). 3-methyl-2-oxobutanoate is bound by residues 41–42 (DS), aspartate 80, and lysine 110. Residue glutamate 112 coordinates Mg(2+). Glutamate 178 functions as the Proton acceptor in the catalytic mechanism.

It belongs to the PanB family. As to quaternary structure, homodecamer; pentamer of dimers. Mg(2+) is required as a cofactor.

The protein localises to the cytoplasm. The enzyme catalyses 3-methyl-2-oxobutanoate + (6R)-5,10-methylene-5,6,7,8-tetrahydrofolate + H2O = 2-dehydropantoate + (6S)-5,6,7,8-tetrahydrofolate. Its pathway is cofactor biosynthesis; coenzyme A biosynthesis. Functionally, catalyzes the reversible reaction in which hydroxymethyl group from 5,10-methylenetetrahydrofolate is transferred onto alpha-ketoisovalerate to form ketopantoate. The sequence is that of 3-methyl-2-oxobutanoate hydroxymethyltransferase from Natronomonas pharaonis (strain ATCC 35678 / DSM 2160 / CIP 103997 / JCM 8858 / NBRC 14720 / NCIMB 2260 / Gabara) (Halobacterium pharaonis).